The primary structure comprises 445 residues: Phosphoglucosamine mutase (445 aa).

The active-site Phosphoserine intermediate is the Ser99. Mg(2+) contacts are provided by Ser99, Asp242, Asp244, and Asp246. Ser99 is modified (phosphoserine).

This sequence belongs to the phosphohexose mutase family. Mg(2+) is required as a cofactor. Activated by phosphorylation.

The enzyme catalyses alpha-D-glucosamine 1-phosphate = D-glucosamine 6-phosphate. Functionally, catalyzes the conversion of glucosamine-6-phosphate to glucosamine-1-phosphate. This Helicobacter pylori (strain HPAG1) protein is Phosphoglucosamine mutase.